Reading from the N-terminus, the 71-residue chain is Putative membrane protein insertion efficiency factor (71 aa).

Belongs to the UPF0161 family.

The protein resides in the cell membrane. Functionally, could be involved in insertion of integral membrane proteins into the membrane. The sequence is that of Putative membrane protein insertion efficiency factor from Ruminiclostridium cellulolyticum (strain ATCC 35319 / DSM 5812 / JCM 6584 / H10) (Clostridium cellulolyticum).